A 146-amino-acid chain; its full sequence is Large-conductance mechanosensitive channel (146 aa).

3 helical membrane passes run 21–41, 44–64, and 83–103; these read VGIIIGAAFTGIVSSLVADLI, IIGLITGGIDFSNLFVNLGDG, and GSFITAVINFLIIAWVVFLLV.

The protein belongs to the MscL family. As to quaternary structure, homopentamer.

Its subcellular location is the cell inner membrane. Its function is as follows. Channel that opens in response to stretch forces in the membrane lipid bilayer. May participate in the regulation of osmotic pressure changes within the cell. This is Large-conductance mechanosensitive channel from Cereibacter sphaeroides (strain ATCC 17029 / ATH 2.4.9) (Rhodobacter sphaeroides).